A 292-amino-acid polypeptide reads, in one-letter code: Sulfofructosephosphate aldolase (292 aa).

The active-site Schiff-base intermediate with substrate is K193.

Belongs to the aldolase LacD family. Homotetramer.

It catalyses the reaction 6-deoxy-6-sulfo-D-fructose 1-phosphate = (2S)-3-sulfolactaldehyde + dihydroxyacetone phosphate. Its function is as follows. Cleaves 6-deoxy-6-sulfo-D-fructose 1-phosphate (SFP) to form dihydroxyacetone phosphate (DHAP) and 3-sulfolactaldehyde (SLA). The polypeptide is Sulfofructosephosphate aldolase (yihT) (Escherichia coli O157:H7).